We begin with the raw amino-acid sequence, 137 residues long: Proofreading thioesterase EntH (137 aa).

Glu63 (nucleophile or proton acceptor) is an active-site residue.

Belongs to the thioesterase PaaI family. In terms of assembly, homotetramer. Dimer of dimers. Interacts specifically with the aryl carrier protein (ArCP) domain of EntB.

The protein resides in the cytoplasm. It functions in the pathway siderophore biosynthesis; enterobactin biosynthesis. Its function is as follows. Required for optimal enterobactin synthesis. Acts as a proofreading enzyme that prevents EntB misacylation by hydrolyzing the thioester bound existing between EntB and wrongly charged molecules. The protein is Proofreading thioesterase EntH of Escherichia coli O6:H1 (strain CFT073 / ATCC 700928 / UPEC).